Consider the following 54-residue polypeptide: Secreted virulence factor MC69 (54 aa).

An N-terminal signal peptide occupies residues 1 to 18 (MKFTLALLTTLCASLASA). A disulfide bridge links Cys-38 with Cys-48.

This sequence belongs to the MC69 virulence factor family.

The protein resides in the secreted. Secreted protein required for appressorial penetration of intact host epidermal cells and for pathogenicity. In Colletotrichum orbiculare (strain 104-T / ATCC 96160 / CBS 514.97 / LARS 414 / MAFF 240422) (Cucumber anthracnose fungus), this protein is Secreted virulence factor MC69.